The sequence spans 343 residues: ATP-dependent 6-phosphofructokinase (343 aa).

ATP-binding positions include Gly10, 73-74 (RV), and 103-106 (GEGT). Glu104 contacts Mg(2+). Substrate-binding positions include 126–128 (TID), Arg163, 170–172 (MGR), Glu223, Arg267, and 273–276 (HIQR). Asp128 (proton acceptor) is an active-site residue.

Belongs to the phosphofructokinase type A (PFKA) family. Mixed-substrate PFK group III subfamily. In terms of assembly, homodimer or homotetramer. Mg(2+) is required as a cofactor.

The protein resides in the cytoplasm. The enzyme catalyses beta-D-fructose 6-phosphate + ATP = beta-D-fructose 1,6-bisphosphate + ADP + H(+). The catalysed reaction is D-tagatofuranose 6-phosphate + ATP = D-tagatofuranose 1,6-bisphosphate + ADP + H(+). It participates in carbohydrate degradation; glycolysis; D-glyceraldehyde 3-phosphate and glycerone phosphate from D-glucose: step 3/4. In terms of biological role, catalyzes the phosphorylation of D-fructose 6-phosphate to fructose 1,6-bisphosphate by ATP, the first committing step of glycolysis. Can also catalyze the phosphorylation of tagatose-6-phosphate. In Mycobacterium tuberculosis (strain CDC 1551 / Oshkosh), this protein is ATP-dependent 6-phosphofructokinase.